The sequence spans 341 residues: Geranylgeranyl pyrophosphate synthase penG (341 aa).

Residues K68, R71, and H100 each contribute to the isopentenyl diphosphate site. Mg(2+)-binding residues include D107 and D111. R116 contributes to the dimethylallyl diphosphate binding site. R117 contributes to the isopentenyl diphosphate binding site. Positions 194, 195, and 228 each coordinate dimethylallyl diphosphate. D231 contributes to the Mg(2+) binding site. N235, K245, and K255 together coordinate dimethylallyl diphosphate.

The protein belongs to the FPP/GGPP synthase family. Requires Mg(2+) as cofactor.

It catalyses the reaction isopentenyl diphosphate + dimethylallyl diphosphate = (2E)-geranyl diphosphate + diphosphate. It carries out the reaction isopentenyl diphosphate + (2E)-geranyl diphosphate = (2E,6E)-farnesyl diphosphate + diphosphate. The enzyme catalyses isopentenyl diphosphate + (2E,6E)-farnesyl diphosphate = (2E,6E,10E)-geranylgeranyl diphosphate + diphosphate. It participates in secondary metabolite biosynthesis. Its function is as follows. Geranylgeranyl pyrophosphate synthase; part of the gene cluster that mediates the biosynthesis of the indole diterpenes penitrems. The geranylgeranyl diphosphate (GGPP) synthase penG catalyzes the first step in penitrem biosynthesis via conversion of farnesyl pyrophosphate and isopentyl pyrophosphate into geranylgeranyl pyrophosphate (GGPP). Condensation of indole-3-glycerol phosphate with GGPP by the prenyl transferase penC then forms 3-geranylgeranylindole (3-GGI). Epoxidation by the FAD-dependent monooxygenase penM leads to a epoxidized-GGI that is substrate of the terpene cyclase penB for cyclization to yield paspaline. Paspaline is subsequently converted to 13-desoxypaxilline by the cytochrome P450 monooxygenase penP, the latter being then converted to paxilline by the cytochrome P450 monooxygenase penQ. Paxilline is converted to beta-paxitriol via C-10 ketoreduction by the short-chain dehydrogenase PC-15 which can be monoprenylated at the C-20 by the indole diterpene prenyltransferase penD. A two-step elimination (acetylation and elimination) process performed by the O-acetyltransferase PC-16 and the P.simplicissimum ptmI-ortholog not yet identified in P.crustosum, leads to the production of the prenylated form of penijanthine. The FAD-linked oxidoreductase ptmO then converts the prenylated form of penijanthine into PC-M5 which is in turn transformed into PC-M4 by the aromatic dimethylallyltransferase PC-22. A series of oxidation steps involving 4 cytochrome P450 monooxygenases (PC-21, PC-05, PC-23, PC-20) and a FAD-dependent monooxygenase (PC-14) are required for the transformation of PC-M4 to penitrems A and E. Synthesis of these final products is proposed to proceed via penitrems D and C (PC-21, PC-05, PC-14) and penitrems B and F (PC-21, PC-05, PC-14, PC-23). The chain is Geranylgeranyl pyrophosphate synthase penG from Penicillium crustosum (Blue mold fungus).